The primary structure comprises 324 residues: Beta-ketoacyl-[acyl-carrier-protein] synthase III (324 aa).

The active site involves Cys112. A disordered region spans residues 181 to 202 (TDGSRGQNLTSGNNPLRSPFSD). A compositionally biased stretch (polar residues) spans 184-196 (SRGQNLTSGNNPL). The active site involves His249. Residues 250-254 (QANRR) form an ACP-binding region. The active site involves Asn279.

The protein belongs to the thiolase-like superfamily. FabH family. In terms of assembly, homodimer.

It is found in the cytoplasm. The catalysed reaction is malonyl-[ACP] + acetyl-CoA + H(+) = 3-oxobutanoyl-[ACP] + CO2 + CoA. It participates in lipid metabolism; fatty acid biosynthesis. Its function is as follows. Catalyzes the condensation reaction of fatty acid synthesis by the addition to an acyl acceptor of two carbons from malonyl-ACP. Catalyzes the first condensation reaction which initiates fatty acid synthesis and may therefore play a role in governing the total rate of fatty acid production. Possesses both acetoacetyl-ACP synthase and acetyl transacylase activities. Its substrate specificity determines the biosynthesis of branched-chain and/or straight-chain of fatty acids. This Streptococcus uberis (strain ATCC BAA-854 / 0140J) protein is Beta-ketoacyl-[acyl-carrier-protein] synthase III.